The sequence spans 227 residues: 7-cyano-7-deazaguanine synthase (227 aa).

L7–T17 contributes to the ATP binding site. Zn(2+) contacts are provided by C187, C195, C198, and C201.

This sequence belongs to the QueC family. Requires Zn(2+) as cofactor.

The enzyme catalyses 7-carboxy-7-deazaguanine + NH4(+) + ATP = 7-cyano-7-deazaguanine + ADP + phosphate + H2O + H(+). The protein operates within purine metabolism; 7-cyano-7-deazaguanine biosynthesis. Catalyzes the ATP-dependent conversion of 7-carboxy-7-deazaguanine (CDG) to 7-cyano-7-deazaguanine (preQ(0)). This is 7-cyano-7-deazaguanine synthase from Chlorobium luteolum (strain DSM 273 / BCRC 81028 / 2530) (Pelodictyon luteolum).